A 139-amino-acid chain; its full sequence is Putative pre-16S rRNA nuclease (139 aa).

The protein belongs to the YqgF nuclease family.

The protein resides in the cytoplasm. Its function is as follows. Could be a nuclease involved in processing of the 5'-end of pre-16S rRNA. In Streptococcus pneumoniae serotype 19F (strain G54), this protein is Putative pre-16S rRNA nuclease.